A 24-amino-acid chain; its full sequence is DCCGVKLEMCHPCLCDNSCKKSGK.

3 cysteine pairs are disulfide-bonded: Cys-2–Cys-10, Cys-3–Cys-15, and Cys-13–Cys-19. The residue at position 24 (Lys-24) is a Lysine amide.

The protein belongs to the conotoxin A superfamily. Expressed by the venom duct.

It is found in the secreted. Probable neurotoxin with ion channel inhibitor activity. In vivo, elicits dose-dependently excitatory activity upon injection into fish. Its action is slowly reversible. The sequence is that of Conotoxin PIVF from Conus purpurascens (Purple cone).